The chain runs to 349 residues: Small ribosomal subunit protein uS2 (349 aa).

Belongs to the universal ribosomal protein uS2 family.

This is Small ribosomal subunit protein uS2 from Methylobacterium nodulans (strain LMG 21967 / CNCM I-2342 / ORS 2060).